Consider the following 762-residue polypeptide: Proline-rich receptor-like protein kinase PERK10 (762 aa).

A disordered region spans residues 1–322 (MTTPAQAPRE…PTPVTDNSSS (322 aa)). The Extracellular segment spans residues 1–328 (MTTPAQAPRE…NSSSSGISIA (328 aa)). Positions 13 to 23 (SLSPSLASPPL) are enriched in low complexity. Asparagine 37 carries an N-linked (GlcNAc...) asparagine glycan. The segment covering 41-57 (PTREPTNGNPPETTNTP) has biased composition (low complexity). Pro residues-rich tracts occupy residues 60–210 (SSPP…PSTP), 231–246 (PPPPGSKRPTPSPPSP), and 254–275 (HPSPPSPPEETLPPPKPSPDPL). The segment covering 276–305 (PSNSSSPPTLLPPSSVVSPPSPPRKSVSGP) has biased composition (low complexity). Asparagine 278 and asparagine 319 each carry an N-linked (GlcNAc...) asparagine glycan. The helical transmembrane segment at 329–349 (AVVGVSIGVALVLLTLIGVVV) threads the bilayer. Over 350–762 (CCLKKRKKRL…NSYISKDENL (413 aa)) the chain is Cytoplasmic. The segment at 370-410 (TPMESSSPRSDSALLKTQSSAPLVGNRSSNRTYLSQSEPGG) is disordered. Residues 372-407 (MESSSPRSDSALLKTQSSAPLVGNRSSNRTYLSQSE) are compositionally biased toward polar residues. The region spanning 430–706 (FSDENLLGEG…SQIVRAFDSL (277 aa)) is the Protein kinase domain. Residues 436–444 (LGEGGFGRV) and lysine 458 contribute to the ATP site. Aspartate 554 (proton acceptor) is an active-site residue.

Belongs to the protein kinase superfamily. Ser/Thr protein kinase family. Interacts with KIPK1 and KIPK2 (via its cytosolic domain). In terms of tissue distribution, mostly expressed in inflorescence bolts and flower buds, and, to a lower extent, in roots, seedlings, leaves and siliques.

Its subcellular location is the cell membrane. It catalyses the reaction L-seryl-[protein] + ATP = O-phospho-L-seryl-[protein] + ADP + H(+). The catalysed reaction is L-threonyl-[protein] + ATP = O-phospho-L-threonyl-[protein] + ADP + H(+). Its function is as follows. Could be involved in the negative regulation of root growth. This is Proline-rich receptor-like protein kinase PERK10 (PERK10) from Arabidopsis thaliana (Mouse-ear cress).